A 722-amino-acid chain; its full sequence is Polyribonucleotide nucleotidyltransferase (722 aa).

Residues D498 and D504 each coordinate Mg(2+). The KH domain occupies 565–624 (PQFHTMKIDPDKIRDIIGKGGATIRSITEETGASIDIDDNGTIKIYADDGDGMQAAIARI). Residues 634–702 (GAVYQGKVVR…QRGRIKLSIK (69 aa)) enclose the S1 motif domain.

Belongs to the polyribonucleotide nucleotidyltransferase family. In terms of assembly, component of the RNA degradosome, which is a multiprotein complex involved in RNA processing and mRNA degradation. The cofactor is Mg(2+).

The protein resides in the cytoplasm. The enzyme catalyses RNA(n+1) + phosphate = RNA(n) + a ribonucleoside 5'-diphosphate. Functionally, involved in mRNA degradation. Catalyzes the phosphorolysis of single-stranded polyribonucleotides processively in the 3'- to 5'-direction. This is Polyribonucleotide nucleotidyltransferase from Saccharophagus degradans (strain 2-40 / ATCC 43961 / DSM 17024).